A 947-amino-acid chain; its full sequence is Bifunctional glutamine synthetase adenylyltransferase/adenylyl-removing enzyme (947 aa).

Residues 1–440 (MTPLSSPLSQ…VFNELIGDDE (440 aa)) form an adenylyl removase region. Residues 450-947 (SEPWREVWQD…ASWRKWLVAV (498 aa)) form an adenylyl transferase region.

Belongs to the GlnE family. Mg(2+) is required as a cofactor.

The catalysed reaction is [glutamine synthetase]-O(4)-(5'-adenylyl)-L-tyrosine + phosphate = [glutamine synthetase]-L-tyrosine + ADP. It carries out the reaction [glutamine synthetase]-L-tyrosine + ATP = [glutamine synthetase]-O(4)-(5'-adenylyl)-L-tyrosine + diphosphate. Its function is as follows. Involved in the regulation of glutamine synthetase GlnA, a key enzyme in the process to assimilate ammonia. When cellular nitrogen levels are high, the C-terminal adenylyl transferase (AT) inactivates GlnA by covalent transfer of an adenylyl group from ATP to specific tyrosine residue of GlnA, thus reducing its activity. Conversely, when nitrogen levels are low, the N-terminal adenylyl removase (AR) activates GlnA by removing the adenylyl group by phosphorolysis, increasing its activity. The regulatory region of GlnE binds the signal transduction protein PII (GlnB) which indicates the nitrogen status of the cell. In Salmonella schwarzengrund (strain CVM19633), this protein is Bifunctional glutamine synthetase adenylyltransferase/adenylyl-removing enzyme.